The primary structure comprises 89 residues: Putative defensin-like protein 40 (89 aa).

The first 26 residues, 1-26 (MAGIANGVGLLISFMLICGGMPKGHA), serve as a signal peptide directing secretion. 4 disulfide bridges follow: C33/C88, C46/C69, C55/C81, and C59/C83.

Belongs to the DEFL family.

It localises to the secreted. This is Putative defensin-like protein 40 from Arabidopsis thaliana (Mouse-ear cress).